A 613-amino-acid chain; its full sequence is DBH-like monooxygenase protein 1 (613 aa).

Residues 1–19 form the signal peptide; the sequence is MCCWPLLLLWGLLPGTAAG. Residues 20 to 592 are Lumenal-facing; sequence GSGRTYPHRT…TSSSSSLHRD (573 aa). A DOMON domain is found at 35-148; the sequence is GKYWLGWSQR…STVRVIWAYH (114 aa). N114 carries N-linked (GlcNAc...) asparagine glycosylation. Residue Y203 is part of the active site. 2 disulfides stabilise this stretch: C205–C257 and C242–C269. Residues H235 and H236 each contribute to the Cu cation site. N247 is a glycosylation site (N-linked (GlcNAc...) asparagine). Residues H307, H389, H391, and M464 each contribute to the Cu cation site. Intrachain disulfides connect C364/C480, C368/C550, and C443/C465. H389 is a catalytic residue. N-linked (GlcNAc...) asparagine glycosylation is found at N476 and N517. Residues 593 to 613 form a helical membrane-spanning segment; the sequence is FSINLLVCLLLLSCTLSTKSL.

Belongs to the copper type II ascorbate-dependent monooxygenase family. Cu(2+) is required as a cofactor. Post-translationally, N-glycosylated. In terms of tissue distribution, highly expressed in lung, kidney, brain and spinal cord.

It is found in the endoplasmic reticulum membrane. In Homo sapiens (Human), this protein is DBH-like monooxygenase protein 1 (MOXD1).